Here is a 228-residue protein sequence, read N- to C-terminus: 2,3-bisphosphoglycerate-dependent phosphoglycerate mutase (228 aa).

Substrate is bound by residues 8-15, 21-22, Arg-60, 87-90, Lys-98, 114-115, and 183-184; these read RHGQSEWN, TG, ERHY, RR, and GN. Catalysis depends on His-9, which acts as the Tele-phosphohistidine intermediate. The active-site Proton donor/acceptor is the Glu-87.

Belongs to the phosphoglycerate mutase family. BPG-dependent PGAM subfamily.

The enzyme catalyses (2R)-2-phosphoglycerate = (2R)-3-phosphoglycerate. It functions in the pathway carbohydrate degradation; glycolysis; pyruvate from D-glyceraldehyde 3-phosphate: step 3/5. In terms of biological role, catalyzes the interconversion of 2-phosphoglycerate and 3-phosphoglycerate. The polypeptide is 2,3-bisphosphoglycerate-dependent phosphoglycerate mutase (Staphylococcus epidermidis (strain ATCC 35984 / DSM 28319 / BCRC 17069 / CCUG 31568 / BM 3577 / RP62A)).